Here is a 265-residue protein sequence, read N- to C-terminus: Hydroxyethylthiazole kinase 1 (265 aa).

Residue Met-39 participates in substrate binding. Residues Lys-115 and Thr-168 each coordinate ATP. Gly-195 is a binding site for substrate.

The protein belongs to the Thz kinase family. Mg(2+) is required as a cofactor.

It catalyses the reaction 5-(2-hydroxyethyl)-4-methylthiazole + ATP = 4-methyl-5-(2-phosphooxyethyl)-thiazole + ADP + H(+). It participates in cofactor biosynthesis; thiamine diphosphate biosynthesis; 4-methyl-5-(2-phosphoethyl)-thiazole from 5-(2-hydroxyethyl)-4-methylthiazole: step 1/1. Catalyzes the phosphorylation of the hydroxyl group of 4-methyl-5-beta-hydroxyethylthiazole (THZ). In Clostridium botulinum (strain Loch Maree / Type A3), this protein is Hydroxyethylthiazole kinase 1.